The following is a 912-amino-acid chain: Protein translocase subunit SecA (912 aa).

ATP is bound by residues Gln87, 105–109 (GEGKT), and Asp508. The segment at 855–912 (QHQDAGGYGADEEVEQMQGGNAPVPVSQVTRDEPKVGRNDPCPCGSGKKYKHCHGQLS) is disordered. Residues Cys896, Cys898, Cys907, and His908 each contribute to the Zn(2+) site. Over residues 902–912 (KKYKHCHGQLS) the composition is skewed to basic residues.

This sequence belongs to the SecA family. In terms of assembly, monomer and homodimer. Part of the essential Sec protein translocation apparatus which comprises SecA, SecYEG and auxiliary proteins SecDF-YajC and YidC. Zn(2+) serves as cofactor.

It localises to the cell inner membrane. It is found in the cytoplasm. The catalysed reaction is ATP + H2O + cellular proteinSide 1 = ADP + phosphate + cellular proteinSide 2.. Part of the Sec protein translocase complex. Interacts with the SecYEG preprotein conducting channel. Has a central role in coupling the hydrolysis of ATP to the transfer of proteins into and across the cell membrane, serving both as a receptor for the preprotein-SecB complex and as an ATP-driven molecular motor driving the stepwise translocation of polypeptide chains across the membrane. The polypeptide is Protein translocase subunit SecA (Xanthomonas campestris pv. campestris (strain B100)).